Consider the following 513-residue polypeptide: ATP synthase subunit alpha (513 aa).

An ATP-binding site is contributed by glycine 169 to threonine 176.

It belongs to the ATPase alpha/beta chains family. As to quaternary structure, F-type ATPases have 2 components, CF(1) - the catalytic core - and CF(0) - the membrane proton channel. CF(1) has five subunits: alpha(3), beta(3), gamma(1), delta(1), epsilon(1). CF(0) has three main subunits: a(1), b(2) and c(9-12). The alpha and beta chains form an alternating ring which encloses part of the gamma chain. CF(1) is attached to CF(0) by a central stalk formed by the gamma and epsilon chains, while a peripheral stalk is formed by the delta and b chains.

Its subcellular location is the cell inner membrane. It catalyses the reaction ATP + H2O + 4 H(+)(in) = ADP + phosphate + 5 H(+)(out). Its function is as follows. Produces ATP from ADP in the presence of a proton gradient across the membrane. The alpha chain is a regulatory subunit. The sequence is that of ATP synthase subunit alpha from Mannheimia succiniciproducens (strain KCTC 0769BP / MBEL55E).